A 789-amino-acid polypeptide reads, in one-letter code: Polyribonucleotide nucleotidyltransferase (789 aa).

Residues Asp494 and Asp500 each contribute to the Mg(2+) site. In terms of domain architecture, KH spans 561-620; that stretch reads PRIESIFINKDKIRNVIGSGGKNIREICEKTGARVEIMQDGTVMIYAINNDAVEYAKNMI. The 68-residue stretch at 630 to 697 folds into the S1 motif domain; sequence GKVFDGTVIE…DREYVQLSMR (68 aa). Positions 709 to 789 are disordered; it reads GELYNIRKTN…NEVPRKPRFF (81 aa). A compositionally biased stretch (basic residues) spans 737–749; the sequence is SEKKRRGSGRSRR. The span at 763-780 shows a compositional bias: low complexity; the sequence is NNGFGNGNRSFNDNRNGN.

The protein belongs to the polyribonucleotide nucleotidyltransferase family. Mg(2+) serves as cofactor.

It localises to the cytoplasm. It carries out the reaction RNA(n+1) + phosphate = RNA(n) + a ribonucleoside 5'-diphosphate. Involved in mRNA degradation. Catalyzes the phosphorolysis of single-stranded polyribonucleotides processively in the 3'- to 5'-direction. This is Polyribonucleotide nucleotidyltransferase from Ehrlichia ruminantium (strain Gardel).